The primary structure comprises 296 residues: MERLTLPPGGAQAVDEYLEYRRIVGEDDGGKLFTPEEYEEYKKKVLPMRLQNRLFVSWRSPTGMDCKLVGPETLCFCTHRYKQHKTDFETVPQQRPIDLPCRVTGCQCKAYHYVPLNGTQPIRCRCKHFADQHSPALGFTCNACSKCSGFHSCFTCACGQPAYAHDTVVETRQERLAQGKPVGQDVPYAAMGGLTGFSSLAEGYMRLDDSGIGAPSVDVLDSPVSVMDHPFLRAMQPPSTSSPQPLAVGPSTQISSLRKPEEDDMAYFERQYQERIKMEKAAKKGKALPPPSTQPS.

Residues 235–263 (MQPPSTSSPQPLAVGPSTQISSLRKPEED) are disordered. Over residues 237-256 (PPSTSSPQPLAVGPSTQISS) the composition is skewed to polar residues.

Belongs to the FAM221 family.

This chain is Protein FAM221A (Fam221a), found in Rattus norvegicus (Rat).